The primary structure comprises 371 residues: Anhydro-N-acetylmuramic acid kinase (371 aa).

Glycine 12–aspartate 20 provides a ligand contact to ATP.

It belongs to the anhydro-N-acetylmuramic acid kinase family.

It catalyses the reaction 1,6-anhydro-N-acetyl-beta-muramate + ATP + H2O = N-acetyl-D-muramate 6-phosphate + ADP + H(+). The protein operates within amino-sugar metabolism; 1,6-anhydro-N-acetylmuramate degradation. It functions in the pathway cell wall biogenesis; peptidoglycan recycling. Catalyzes the specific phosphorylation of 1,6-anhydro-N-acetylmuramic acid (anhMurNAc) with the simultaneous cleavage of the 1,6-anhydro ring, generating MurNAc-6-P. Is required for the utilization of anhMurNAc either imported from the medium or derived from its own cell wall murein, and thus plays a role in cell wall recycling. This Brucella anthropi (strain ATCC 49188 / DSM 6882 / CCUG 24695 / JCM 21032 / LMG 3331 / NBRC 15819 / NCTC 12168 / Alc 37) (Ochrobactrum anthropi) protein is Anhydro-N-acetylmuramic acid kinase.